Consider the following 189-residue polypeptide: Elongation factor P (189 aa).

N6-(3,6-diaminohexanoyl)-5-hydroxylysine is present on Lys-34.

The protein belongs to the elongation factor P family. Post-translationally, may be beta-lysylated on the epsilon-amino group of Lys-34 by the combined action of EpmA and EpmB, and then hydroxylated on the C5 position of the same residue by EpmC (if this protein is present). Lysylation is critical for the stimulatory effect of EF-P on peptide-bond formation. The lysylation moiety may extend toward the peptidyltransferase center and stabilize the terminal 3-CCA end of the tRNA. Hydroxylation of the C5 position on Lys-34 may allow additional potential stabilizing hydrogen-bond interactions with the P-tRNA.

The protein resides in the cytoplasm. It functions in the pathway protein biosynthesis; polypeptide chain elongation. Its function is as follows. Involved in peptide bond synthesis. Alleviates ribosome stalling that occurs when 3 or more consecutive Pro residues or the sequence PPG is present in a protein, possibly by augmenting the peptidyl transferase activity of the ribosome. Modification of Lys-34 is required for alleviation. This Saccharophagus degradans (strain 2-40 / ATCC 43961 / DSM 17024) protein is Elongation factor P.